The primary structure comprises 126 residues: RutC family protein bbp_334 (126 aa).

The protein belongs to the RutC family.

The polypeptide is RutC family protein bbp_334 (Buchnera aphidicola subsp. Baizongia pistaciae (strain Bp)).